The primary structure comprises 182 residues: Ribosome-recycling factor (182 aa).

It belongs to the RRF family.

The protein resides in the cytoplasm. Responsible for the release of ribosomes from messenger RNA at the termination of protein biosynthesis. May increase the efficiency of translation by recycling ribosomes from one round of translation to another. This chain is Ribosome-recycling factor, found in Picosynechococcus sp. (strain ATCC 27264 / PCC 7002 / PR-6) (Agmenellum quadruplicatum).